The chain runs to 486 residues: MASIRELHEQLVKKERSAVEITQETLDHIQELEPKLHSFLHITAQQALEQARAVDAKIAAGEEIGLLAGIPIGVKDNMCTKGIPTTCASRILENFVPPYESTVTQKLLDAGAVVVGKTNLDEFAMGSSTENSAYQVTANPWDLSRVPGGSSGGSAAAVAAEECVVALGSDTGGSIRQPASFCGVVGLKPTYGLVSRYGLVAYASSLDQIGPFGKSVEDTAILLKAIAGYDPKDSTSLKVEIPDYVASLKPDLKARGKLRIGVIKETFGEGLDSVVEQAVTKAIEQLQRLGAEIHVISCPNFRYGVPSYYIIAPSEASANLARYDGVKYGWRAPEGDNLLSMYKRTRATGFGAEVKRRIMIGTYALSAGYYDAYYLKAQKVRTLIKQDFENAFKNVDVLVSPTAPTTAFKAGEKTADPISMYLNDLMTIPVNLAGLPGLSLPCGFDEQGLPIGLQLIGKVLREDQLLQVAYAYEQSTSWHLSQPKIS.

Catalysis depends on charge relay system residues Lys-75 and Ser-150. Ser-174 serves as the catalytic Acyl-ester intermediate.

The protein belongs to the amidase family. GatA subfamily. As to quaternary structure, heterotrimer of A, B and C subunits.

The enzyme catalyses L-glutamyl-tRNA(Gln) + L-glutamine + ATP + H2O = L-glutaminyl-tRNA(Gln) + L-glutamate + ADP + phosphate + H(+). In terms of biological role, allows the formation of correctly charged Gln-tRNA(Gln) through the transamidation of misacylated Glu-tRNA(Gln) in organisms which lack glutaminyl-tRNA synthetase. The reaction takes place in the presence of glutamine and ATP through an activated gamma-phospho-Glu-tRNA(Gln). The chain is Glutamyl-tRNA(Gln) amidotransferase subunit A from Trichormus variabilis (strain ATCC 29413 / PCC 7937) (Anabaena variabilis).